Reading from the N-terminus, the 245-residue chain is 4-hydroxy-tetrahydrodipicolinate reductase (245 aa).

Residues 7–12 (GAKGKV), 75–77 (GTT), and 102–105 (APNF) each bind NAD(+). Residue His132 is the Proton donor/acceptor of the active site. Residue His133 participates in (S)-2,3,4,5-tetrahydrodipicolinate binding. Residue Lys136 is the Proton donor of the active site. A (S)-2,3,4,5-tetrahydrodipicolinate-binding site is contributed by 142–143 (GT).

Belongs to the DapB family.

It localises to the cytoplasm. The catalysed reaction is (S)-2,3,4,5-tetrahydrodipicolinate + NAD(+) + H2O = (2S,4S)-4-hydroxy-2,3,4,5-tetrahydrodipicolinate + NADH + H(+). The enzyme catalyses (S)-2,3,4,5-tetrahydrodipicolinate + NADP(+) + H2O = (2S,4S)-4-hydroxy-2,3,4,5-tetrahydrodipicolinate + NADPH + H(+). The protein operates within amino-acid biosynthesis; L-lysine biosynthesis via DAP pathway; (S)-tetrahydrodipicolinate from L-aspartate: step 4/4. Functionally, catalyzes the conversion of 4-hydroxy-tetrahydrodipicolinate (HTPA) to tetrahydrodipicolinate. In Mycobacterium sp. (strain JLS), this protein is 4-hydroxy-tetrahydrodipicolinate reductase.